We begin with the raw amino-acid sequence, 86 residues long: Large ribosomal subunit protein uL23 (86 aa).

This sequence belongs to the universal ribosomal protein uL23 family. In terms of assembly, part of the 50S ribosomal subunit. Contacts protein L29.

In terms of biological role, binds to 23S rRNA. One of the proteins that surrounds the polypeptide exit tunnel on the outside of the ribosome. In Methanococcus aeolicus (strain ATCC BAA-1280 / DSM 17508 / OCM 812 / Nankai-3), this protein is Large ribosomal subunit protein uL23.